A 30-amino-acid polypeptide reads, in one-letter code: Cycloviolacin-O24 (30 aa).

The cyclopeptide (Gly-Asn) cross-link spans 1–30 (GLPTCGETCFGGTCNTPGCTCDPWPVCTHN). Intrachain disulfides connect cysteine 5-cysteine 19, cysteine 9-cysteine 21, and cysteine 14-cysteine 27.

Post-translationally, this is a cyclic peptide. As to expression, expressed in leaves but not in petals, petioles, roots and runners (at protein level).

Its function is as follows. Probably participates in a plant defense mechanism. Has hemolytic activity. The sequence is that of Cycloviolacin-O24 from Viola odorata (Sweet violet).